The following is a 476-amino-acid chain: Nuclear envelope morphology protein 1 (476 aa).

The tract at residues R47–E74 is disordered. Over residues S51–S62 the composition is skewed to low complexity. Residues P64–E74 are compositionally biased toward basic and acidic residues. Residues F123 to Y139 form a helical membrane-spanning segment. Disordered regions lie at residues S164–N190 and G232–D256. Over residues A234–D256 the composition is skewed to polar residues. 4 N-linked (GlcNAc...) asparagine glycosylation sites follow: N237, N257, N284, and N356. The FCP1 homology domain maps to S299–L460.

It belongs to the Dullard family. Component of the nem1-spo7 complex.

It localises to the endoplasmic reticulum membrane. The protein resides in the nucleus membrane. It carries out the reaction O-phospho-L-seryl-[protein] + H2O = L-seryl-[protein] + phosphate. The catalysed reaction is O-phospho-L-threonyl-[protein] + H2O = L-threonyl-[protein] + phosphate. In terms of biological role, catalytic component of the nem1-spo7 complex which acts as a phosphatase and may be required for proper nuclear membrane morphology. The chain is Nuclear envelope morphology protein 1 (nem1) from Schizosaccharomyces pombe (strain 972 / ATCC 24843) (Fission yeast).